The following is a 229-amino-acid chain: Germin-like protein 12-1 (229 aa).

Positions 1–22 are cleaved as a signal peptide; the sequence is MASSNFFLPTALIALVATQAMA. An intrachain disulfide couples cysteine 32 to cysteine 47. In terms of domain architecture, Cupin type-1 spans 62–217; it reads ANLDKPMDTT…AFQVDKKAVD (156 aa). N-linked (GlcNAc...) asparagine glycosylation occurs at asparagine 78. Mn(2+) contacts are provided by histidine 111, histidine 113, glutamate 118, and histidine 162.

The protein belongs to the germin family. Oligomer (believed to be a pentamer but probably hexamer).

The protein resides in the secreted. The protein localises to the extracellular space. It is found in the apoplast. May play a role in plant defense. Probably has no oxalate oxidase activity even if the active site is conserved. The protein is Germin-like protein 12-1 of Oryza sativa subsp. japonica (Rice).